The chain runs to 168 residues: Cyclic pyranopterin monophosphate synthase (168 aa).

Substrate contacts are provided by residues 81–83 (LCH) and 117–118 (ME). Asp132 is a catalytic residue.

This sequence belongs to the MoaC family. As to quaternary structure, homohexamer; trimer of dimers.

It carries out the reaction (8S)-3',8-cyclo-7,8-dihydroguanosine 5'-triphosphate = cyclic pyranopterin phosphate + diphosphate. Its pathway is cofactor biosynthesis; molybdopterin biosynthesis. Catalyzes the conversion of (8S)-3',8-cyclo-7,8-dihydroguanosine 5'-triphosphate to cyclic pyranopterin monophosphate (cPMP). In Deinococcus radiodurans (strain ATCC 13939 / DSM 20539 / JCM 16871 / CCUG 27074 / LMG 4051 / NBRC 15346 / NCIMB 9279 / VKM B-1422 / R1), this protein is Cyclic pyranopterin monophosphate synthase.